Reading from the N-terminus, the 492-residue chain is Cysteine--tRNA ligase (492 aa).

Cys-35 provides a ligand contact to Zn(2+). The 'HIGH' region signature appears at 37–47 (PTVYSNVHLGN). Cys-230, His-255, and Glu-259 together coordinate Zn(2+). Positions 287–291 (KMAKS) match the 'KMSKS' region motif. An ATP-binding site is contributed by Lys-290.

This sequence belongs to the class-I aminoacyl-tRNA synthetase family. Monomer. The cofactor is Zn(2+).

The protein resides in the cytoplasm. It catalyses the reaction tRNA(Cys) + L-cysteine + ATP = L-cysteinyl-tRNA(Cys) + AMP + diphosphate. The protein is Cysteine--tRNA ligase of Flavobacterium johnsoniae (strain ATCC 17061 / DSM 2064 / JCM 8514 / BCRC 14874 / CCUG 350202 / NBRC 14942 / NCIMB 11054 / UW101) (Cytophaga johnsonae).